A 274-amino-acid chain; its full sequence is Large ribosomal subunit protein uL2cz/uL2cy (274 aa).

2 disordered regions span residues 1–22 and 224–274; these read MAINLYKTSTPSTRNGTVDSQV and NPVD…RRSK.

This sequence belongs to the universal ribosomal protein uL2 family. Part of the 50S ribosomal subunit.

It is found in the plastid. It localises to the chloroplast. The polypeptide is Large ribosomal subunit protein uL2cz/uL2cy (rpl2-A) (Helianthus annuus (Common sunflower)).